Reading from the N-terminus, the 56-residue chain is Large ribosomal subunit protein bL32c (56 aa).

Basic residues predominate over residues 1–20; the sequence is MAAPKKRTSKSRKNMRKSTW. Positions 1–28 are disordered; the sequence is MAAPKKRTSKSRKNMRKSTWKRQAATQA.

It belongs to the bacterial ribosomal protein bL32 family.

The protein localises to the plastid. It localises to the chloroplast. In Mesostigma viride (Green alga), this protein is Large ribosomal subunit protein bL32c (rpl32).